A 1090-amino-acid polypeptide reads, in one-letter code: Telomerase reverse transcriptase (1090 aa).

The segment at 184–301 is disordered; sequence GFLLRPPSRK…PLEGGPSWRS (118 aa). A compositionally biased stretch (basic residues) spans 190-204; that stretch reads PSRKHKSFQVGKKTR. Composition is skewed to basic and acidic residues over residues 218–232 and 252–262; these read EESR…EVST and HHEERRQHEAV. Residues 281–294 are compositionally biased toward pro residues; it reads KPPPETSAAPPPLE. A TFLY; involved in RNA binding motif is present at residues 316–321; sequence TLGFLY. Interaction with RNA template regions lie at residues 371–376 and 477–503; these read LPLRYF and WKIK…ELAY. The 325-residue stretch at 569-893 folds into the Reverse transcriptase domain; it reads SPAQVASLPK…CLFPWCGLLL (325 aa). Residues Asp-666, Asp-826, and Asp-827 each coordinate Mg(2+).

Belongs to the reverse transcriptase family. Telomerase subfamily. As to quaternary structure, catalytic subunit of the telomerase holoenzyme complex composed minimally of TERT and the telomerase RNA template component (TERC). As to expression, expressed at highest levels in gonads and brain, and at lower levels in heart, spleen, kidney, gill, muscle and skin. Detected in embryonic stem cell lines before and after differentiation. Isoform F is expressed in gonads, with higher levels in testis relative to ovary, but is not detected in other tissues. Isoform B is expressed predominantly in testis. Isoform C is up-regulated in embryonic stem cell lines after differentiation.

It is found in the nucleus. The protein localises to the chromosome. Its subcellular location is the telomere. It catalyses the reaction DNA(n) + a 2'-deoxyribonucleoside 5'-triphosphate = DNA(n+1) + diphosphate. Functionally, telomerase is a ribonucleoprotein enzyme essential for the replication of chromosome termini in most eukaryotes. It elongates telomeres. It is a reverse transcriptase that adds simple sequence repeats to chromosome ends by copying a template sequence within the RNA component of the enzyme. The polypeptide is Telomerase reverse transcriptase (Oryzias latipes (Japanese rice fish)).